The chain runs to 180 residues: F17 fimbrial protein (180 aa).

Residues 1-21 (MQKIQFILGILAAASSSATLA) form the signal peptide. A disulfide bridge links Cys-37 with Cys-77.

It belongs to the fimbrial protein family.

Its subcellular location is the fimbrium. Fimbriae (also called pili), polar filaments radiating from the surface of the bacterium to a length of 0.5-1.5 micrometers and numbering 100-300 per cell, enable bacteria to colonize the epithelium of specific host organs. The protein is F17 fimbrial protein (F17a-A) of Escherichia coli.